Consider the following 55-residue polypeptide: Large ribosomal subunit protein bL33 (55 aa).

Belongs to the bacterial ribosomal protein bL33 family.

The sequence is that of Large ribosomal subunit protein bL33 from Yersinia pestis (strain Pestoides F).